Consider the following 143-residue polypeptide: UPF0292 protein Mbar_A0484 (143 aa).

The Toprim domain maps to 28–109; it reads GAIIIVEGKR…KPELEIRNKL (82 aa). Residues glutamate 34, aspartate 78, and aspartate 80 each coordinate Mg(2+).

This sequence belongs to the UPF0292 family. The cofactor is Mg(2+).

The sequence is that of UPF0292 protein Mbar_A0484 from Methanosarcina barkeri (strain Fusaro / DSM 804).